The sequence spans 122 residues: MIQMQTTLDVADNSGARSVQCIKVLGGSHRRYANIGDIIKVTVKEAIPRGKVKKGDVVNAVVVRTRKGVRRQDGSVIRFDRNAAVLLNNNQQPIGTRIFGPVTRELRSEQFMKIISLAPEVL.

The protein belongs to the universal ribosomal protein uL14 family. In terms of assembly, part of the 50S ribosomal subunit. Forms a cluster with proteins L3 and L19. In the 70S ribosome, L14 and L19 interact and together make contacts with the 16S rRNA in bridges B5 and B8.

Its function is as follows. Binds to 23S rRNA. Forms part of two intersubunit bridges in the 70S ribosome. The sequence is that of Large ribosomal subunit protein uL14 from Idiomarina loihiensis (strain ATCC BAA-735 / DSM 15497 / L2-TR).